We begin with the raw amino-acid sequence, 42 residues long: Cytochrome b6-f complex subunit 7 (42 aa).

The chain crosses the membrane as a helical span at residues 19–37 (AVTCIFMTLFGLSLGFALL).

The protein belongs to the PetM family. In terms of assembly, the 4 large subunits of the cytochrome b6-f complex are cytochrome b6, subunit IV (17 kDa polypeptide, PetD), cytochrome f and the Rieske protein, while the 4 small subunits are PetG, PetL, PetM and PetN. The complex functions as a dimer.

Its subcellular location is the plastid. It localises to the chloroplast thylakoid membrane. Functionally, component of the cytochrome b6-f complex, which mediates electron transfer between photosystem II (PSII) and photosystem I (PSI), cyclic electron flow around PSI, and state transitions. The chain is Cytochrome b6-f complex subunit 7 from Thalassiosira pseudonana (Marine diatom).